We begin with the raw amino-acid sequence, 142 residues long: Large ribosomal subunit protein uL11 (142 aa).

This sequence belongs to the universal ribosomal protein uL11 family. As to quaternary structure, part of the ribosomal stalk of the 50S ribosomal subunit. Interacts with L10 and the large rRNA to form the base of the stalk. L10 forms an elongated spine to which L12 dimers bind in a sequential fashion forming a multimeric L10(L12)X complex. Post-translationally, one or more lysine residues are methylated.

In terms of biological role, forms part of the ribosomal stalk which helps the ribosome interact with GTP-bound translation factors. The polypeptide is Large ribosomal subunit protein uL11 (Bartonella quintana (strain Toulouse) (Rochalimaea quintana)).